Reading from the N-terminus, the 489-residue chain is 3-octaprenyl-4-hydroxybenzoate carboxy-lyase (489 aa).

Mn(2+) is bound at residue N172. Residues 175 to 177 (IYR), 189 to 191 (RWL), and 194 to 195 (RG) each bind prenylated FMN. E238 is a Mn(2+) binding site. Residue D287 is the Proton donor of the active site.

The protein belongs to the UbiD family. As to quaternary structure, homohexamer. It depends on prenylated FMN as a cofactor. Mn(2+) is required as a cofactor.

It is found in the cell membrane. It carries out the reaction a 4-hydroxy-3-(all-trans-polyprenyl)benzoate + H(+) = a 2-(all-trans-polyprenyl)phenol + CO2. It functions in the pathway cofactor biosynthesis; ubiquinone biosynthesis. Catalyzes the decarboxylation of 3-octaprenyl-4-hydroxy benzoate to 2-octaprenylphenol, an intermediate step in ubiquinone biosynthesis. The protein is 3-octaprenyl-4-hydroxybenzoate carboxy-lyase of Aeromonas salmonicida (strain A449).